A 229-amino-acid polypeptide reads, in one-letter code: Probable U3 small nucleolar RNA-associated protein 11 (229 aa).

Disordered stretches follow at residues 1–23 and 199–229; these read MSSLRNAIQRRAHKERAQPESRK and KKPGRKRKLREDEIENQTSRPVYKWRAQRKR.

It belongs to the UTP11 family. Component of the ribosomal small subunit (SSU) processome.

Its subcellular location is the nucleus. The protein resides in the nucleolus. Its function is as follows. Involved in nucleolar processing of pre-18S ribosomal RNA. The polypeptide is Probable U3 small nucleolar RNA-associated protein 11 (Oryza sativa subsp. japonica (Rice)).